The following is a 137-amino-acid chain: MLYHGVDLVEVARIRHAVVRYGQRFVQRVYTATEQADCLAGSGDVRYEALAARWAAKEACAKALGIGLRGLGALAVADRPRAGFHEIEVVRDNDGRPVLRLSGFAAEQAAALGICALAVSLSHTDELALASVVAWAG.

2 residues coordinate Mg(2+): aspartate 7 and glutamate 58.

Belongs to the P-Pant transferase superfamily. AcpS family. Mg(2+) is required as a cofactor.

Its subcellular location is the cytoplasm. It carries out the reaction apo-[ACP] + CoA = holo-[ACP] + adenosine 3',5'-bisphosphate + H(+). Functionally, transfers the 4'-phosphopantetheine moiety from coenzyme A to a Ser of acyl-carrier-protein. The protein is Holo-[acyl-carrier-protein] synthase of Chloroflexus aurantiacus (strain ATCC 29366 / DSM 635 / J-10-fl).